A 153-amino-acid chain; its full sequence is ORM1-like protein 1 (153 aa).

At 1-26 (MNVGVAHSEVNPNTRVMNSRGMWLTY) the chain is on the cytoplasmic side. 2 helical membrane passes run 27–46 (ALGV…FSVP) and 47–64 (VAWT…YVFL). Residues 65–100 (HAVKGTPFETPDQGKARLLTHWEQLDYGVQFTSSRK) lie on the Cytoplasmic side of the membrane. Residues 101 to 121 (FFTISPIILYFLASFYTKYDP) traverse the membrane as a helical segment. Residues 122 to 123 (TH) lie on the Extracellular side of the membrane. A helical membrane pass occupies residues 124 to 140 (FILNTASLLSVLIPKMP). Topologically, residues 141–153 (QLHGVRIFGINKY) are cytoplasmic.

Belongs to the ORM family. As to quaternary structure, ceramide-sensitive subunit of the serine palmitoyltransferase (SPT) complex, which is also composed of SPTLC1, SPTLC2/3 and SPTSSA/B. Widely expressed. Expressed in adult and fetal heart, brain, lung, liver, skeletal muscle and kidney. Expressed in adult pancreas and placenta and in fetal spleen abd thymus. Expressed at intermediate level in pancreas, placenta and brain but low in skeletal muscle and lung.

It is found in the endoplasmic reticulum membrane. Its function is as follows. Plays an essential role in the homeostatic regulation of sphingolipid de novo biosynthesis by modulating the activity of the serine palmitoyltransferase (SPT) in response to ceramide levels. When complexed to SPT, the binding of ceramides to its N-terminus stabilizes a conformation that block SPT substrate entry, hence preventing SPT catalytic activity. Through this mechanism, maintains ceramide levels at sufficient concentrations for the production of complex sphingolipids, but which prevents the accumulation of ceramides to levels that trigger apoptosis. The protein is ORM1-like protein 1 (ORMDL1) of Homo sapiens (Human).